Consider the following 196-residue polypeptide: DnaA initiator-associating protein DiaA (196 aa).

The SIS domain occupies 34-196 (LVQSLLNGNK…DNTLFPHQDD (163 aa)).

The protein belongs to the SIS family. DiaA subfamily. As to quaternary structure, homotetramer; dimer of dimers.

Required for the timely initiation of chromosomal replication via direct interactions with the DnaA initiator protein. The polypeptide is DnaA initiator-associating protein DiaA (Shigella flexneri serotype 5b (strain 8401)).